Consider the following 121-residue polypeptide: MPKKRSSPNRNVQIADQIQRDLSELLREVKDPRIGLVTIQSVELTPDYAHAKVYFTTLTGDPQQTLEALTHAAGHLHNQLFKRLHIHTVPTLHFHYDKTIERAVEMSRLIDEANANRAKED.

It belongs to the RbfA family. As to quaternary structure, monomer. Binds 30S ribosomal subunits, but not 50S ribosomal subunits or 70S ribosomes.

It is found in the cytoplasm. In terms of biological role, one of several proteins that assist in the late maturation steps of the functional core of the 30S ribosomal subunit. Associates with free 30S ribosomal subunits (but not with 30S subunits that are part of 70S ribosomes or polysomes). Required for efficient processing of 16S rRNA. May interact with the 5'-terminal helix region of 16S rRNA. This is Ribosome-binding factor A from Paraburkholderia xenovorans (strain LB400).